Reading from the N-terminus, the 713-residue chain is NAD(+) hydrolase SARM1 (713 aa).

The stretch at 53-96 (DVQAVLDGSLPALRSAIRTLRSSKDTGDLEETRRAIAETFQLVE) is one ARM 1 repeat. Residues W99, R106, 145-153 (EQILVSENR), and 186-189 (HMFK) each bind NAD(+). ARM repeat units follow at residues 110-149 (EEIC…QILV), 151-189 (ENRD…HMFK), 192-231 (EETS…NCAM), 233-276 (GGHR…LAAN), 277-310 (REME…NMLD), 311-350 (SADS…VETS), and 355-398 (QRNT…EEVP). 2 SAM domains span residues 408–472 (WKSG…LKTY) and 478–537 (CDPN…ILSA). Residues 552-695 (KGPDVFISYR…KILRFLEGCP (144 aa)) enclose the TIR domain. NAD(+) contacts are provided by residues 561–562 (RR) and E591. The active site involves E634.

It belongs to the SARM1 family. In terms of assembly, homooctamer; forms an octameric ring via SAM domains.

It localises to the cytoplasm. It is found in the cell projection. The protein resides in the axon. The protein localises to the dendrite. Its subcellular location is the synapse. It localises to the mitochondrion. The catalysed reaction is NAD(+) + H2O = ADP-D-ribose + nicotinamide + H(+). It catalyses the reaction NAD(+) = cyclic ADP-beta-D-ribose + nicotinamide + H(+). It carries out the reaction NADP(+) + H2O = ADP-D-ribose 2'-phosphate + nicotinamide + H(+). With respect to regulation, autoinhibited: in the inactive state, the enzymatic TIR domain is held apart by the autoinhibiting ARM repeats. NAD(+)-binding to ARM repeats maintains an inactive state by promoting interaction between ARM repeats and the TIR domain, thereby facilitating inhibition of the enzymatic TIR domain. Following activation, possibly by nicotinamide mononucleotide (NMN), auto-inhibitory interactions are released, allowing self-association of the TIR domains and subsequent activation of the NAD(+) hydrolase (NADase) activity. Self-association of TIR domains is facilitated by the octamer of SAM domains. NAD(+) hydrolase, which plays a key role in axonal degeneration following injury by regulating NAD(+) metabolism. Acts as a negative regulator of MYD88- and TRIF-dependent toll-like receptor signaling pathway by promoting Wallerian degeneration, an injury-induced form of programmed subcellular death which involves degeneration of an axon distal to the injury site. Wallerian degeneration is triggerred by NAD(+) depletion: in response to injury, SARM1 is activated and catalyzes cleavage of NAD(+) into ADP-D-ribose (ADPR), cyclic ADPR (cADPR) and nicotinamide; NAD(+) cleavage promoting cytoskeletal degradation and axon destruction. Also able to hydrolyze NADP(+), but not other NAD(+)-related molecules. Can activate neuronal cell death in response to stress. This is NAD(+) hydrolase SARM1 from Danio rerio (Zebrafish).